The chain runs to 224 residues: Peroxiredoxin-6 (224 aa).

The Thioredoxin domain occupies 5 to 169 (LLLGDEAPNF…ILRVVISLQL (165 aa)). Residues 31-40 (DSWGILFSHP) are required and sufficient for targeting to lysosomes and lamellar bodies. The residue at position 44 (T44) is a Phosphothreonine. C47 (cysteine sulfenic acid (-SOH) intermediate; for peroxidase activity) is an active-site residue. K63 is subject to N6-acetyllysine. At Y89 the chain carries Phosphotyrosine. The For phospholipase activity role is filled by D140. T177 is modified (phosphothreonine; by MAPK). Position 209 is an N6-acetyllysine; alternate (K209). At K209 the chain carries N6-succinyllysine; alternate.

Belongs to the peroxiredoxin family. Prx6 subfamily. As to quaternary structure, homodimer. Interacts with GSTP1; mediates PRDX6 glutathionylation and regeneration. Interacts with APEX1. Interacts with STH. May interact with FAM168B. May interact with HTR2A. Post-translationally, irreversibly inactivated by overoxidation of Cys-47 to sulfinic acid (Cys-SO(2)H) and sulfonic acid (Cys-SO(3)H) forms upon oxidative stress. In terms of processing, phosphorylation at Thr-177 by MAP kinases increases the phospholipase activity of the enzyme. The phosphorylated form exhibits a greater lysophosphatidylcholine acyltransferase activity compared to the non-phosphorylated form.

The protein resides in the cytoplasm. It localises to the lysosome. The enzyme catalyses a hydroperoxide + 2 glutathione = an alcohol + glutathione disulfide + H2O. It carries out the reaction a 1,2-diacyl-sn-glycero-3-phosphocholine + H2O = a 1-acyl-sn-glycero-3-phosphocholine + a fatty acid + H(+). The catalysed reaction is a 1-acyl-sn-glycero-3-phosphocholine + an acyl-CoA = a 1,2-diacyl-sn-glycero-3-phosphocholine + CoA. It catalyses the reaction 1-hexadecanoyl-sn-glycero-3-phosphocholine + hexadecanoyl-CoA = 1,2-dihexadecanoyl-sn-glycero-3-phosphocholine + CoA. The enzyme catalyses 1,2-dihexadecanoyl-sn-glycero-3-phosphocholine + H2O = 1-hexadecanoyl-sn-glycero-3-phosphocholine + hexadecanoate + H(+). Thiol-specific peroxidase that catalyzes the reduction of hydrogen peroxide and organic hydroperoxides to water and alcohols, respectively. Can reduce H(2)O(2) and short chain organic, fatty acid, and phospholipid hydroperoxides. Also has phospholipase activity, and can therefore either reduce the oxidized sn-2 fatty acyl group of phospholipids (peroxidase activity) or hydrolyze the sn-2 ester bond of phospholipids (phospholipase activity). These activities are dependent on binding to phospholipids at acidic pH and to oxidized phospholipds at cytosolic pH. Plays a role in cell protection against oxidative stress by detoxifying peroxides and in phospholipid homeostasis. Exhibits acyl-CoA-dependent lysophospholipid acyltransferase which mediates the conversion of lysophosphatidylcholine (1-acyl-sn-glycero-3-phosphocholine or LPC) into phosphatidylcholine (1,2-diacyl-sn-glycero-3-phosphocholine or PC). Shows a clear preference for LPC as the lysophospholipid and for palmitoyl CoA as the fatty acyl substrate. The protein is Peroxiredoxin-6 (PRDX6) of Macaca fascicularis (Crab-eating macaque).